Consider the following 224-residue polypeptide: Ribose-5-phosphate isomerase A (224 aa).

Substrate-binding positions include 26 to 29 (TGST), 81 to 84 (DGAD), and 94 to 97 (KGGG). E103 functions as the Proton acceptor in the catalytic mechanism. Position 121 (K121) interacts with substrate.

The protein belongs to the ribose 5-phosphate isomerase family. In terms of assembly, homodimer.

The catalysed reaction is aldehydo-D-ribose 5-phosphate = D-ribulose 5-phosphate. It participates in carbohydrate degradation; pentose phosphate pathway; D-ribose 5-phosphate from D-ribulose 5-phosphate (non-oxidative stage): step 1/1. Its function is as follows. Catalyzes the reversible conversion of ribose-5-phosphate to ribulose 5-phosphate. The polypeptide is Ribose-5-phosphate isomerase A (Listeria innocua serovar 6a (strain ATCC BAA-680 / CLIP 11262)).